Reading from the N-terminus, the 874-residue chain is Probable inorganic carbon transporter subunit DabA (874 aa).

Residues Cys398, Asp400, His580, and Cys595 each coordinate Zn(2+).

It belongs to the inorganic carbon transporter (TC 9.A.2) DabA family. As to quaternary structure, forms a complex with DabB. It depends on Zn(2+) as a cofactor.

The protein resides in the cell membrane. In terms of biological role, part of an energy-coupled inorganic carbon pump. The protein is Probable inorganic carbon transporter subunit DabA of Bacillus cereus (strain AH820).